The following is a 439-amino-acid chain: 5-hydroxybenzimidazole synthase (439 aa).

Substrate contacts are provided by residues Met-96, Tyr-125, His-164, 187-189 (SKG), 228-231 (NGIR), and Glu-267. His-271 lines the Zn(2+) pocket. A substrate-binding site is contributed by Tyr-294. His-335 provides a ligand contact to Zn(2+). The [4Fe-4S] cluster site is built by Cys-410, Cys-413, and Cys-417.

It belongs to the ThiC family. 5-hydroxybenzimidazole synthase subfamily. In terms of assembly, homodimer. [4Fe-4S] cluster serves as cofactor.

The catalysed reaction is 5-amino-1-(5-phospho-beta-D-ribosyl)imidazole + AH2 + S-adenosyl-L-methionine = 5-hydroxybenzimidazole + 5'-deoxyadenosine + formate + L-methionine + A + NH4(+) + phosphate + 2 H(+). Functionally, catalyzes the conversion of aminoimidazole ribotide (AIR) to 5-hydroxybenzimidazole (5-HBI) in a radical S-adenosyl-L-methionine (SAM)-dependent reaction. Is thus involved in the anaerobic biosynthesis of the benzimidazole lower axial ligand of the cobamide produced by D.autotrophicum. In Desulforapulum autotrophicum (strain ATCC 43914 / DSM 3382 / VKM B-1955 / HRM2) (Desulfobacterium autotrophicum), this protein is 5-hydroxybenzimidazole synthase.